We begin with the raw amino-acid sequence, 337 residues long: Tryptophan--tRNA ligase (337 aa).

ATP is bound by residues 12-14 (QPS) and 21-22 (GN). The 'HIGH' region signature appears at 13 to 22 (PSADSLHLGN). Asp-138 lines the L-tryptophan pocket. ATP-binding positions include 150 to 152 (GDD), Ile-189, and 198 to 202 (KMSKS). The short motif at 198–202 (KMSKS) is the 'KMSKS' region element.

Belongs to the class-I aminoacyl-tRNA synthetase family. In terms of assembly, homodimer.

The protein resides in the cytoplasm. It carries out the reaction tRNA(Trp) + L-tryptophan + ATP = L-tryptophyl-tRNA(Trp) + AMP + diphosphate + H(+). In terms of biological role, catalyzes the attachment of tryptophan to tRNA(Trp). The sequence is that of Tryptophan--tRNA ligase from Leifsonia xyli subsp. xyli (strain CTCB07).